The following is a 225-amino-acid chain: Insulin-induced gene 2 protein (225 aa).

At 1 to 28 (MAEGETESPRPKKCGPYISSVTSQSVNV) the chain is on the cytoplasmic side. The helical transmembrane segment at 29 to 51 (VIRGVVLFFIGVFLALVLNLLQI) threads the bilayer. The Lumenal portion of the chain corresponds to 52-70 (QRNVTLFPPDVITSIFSSA). The chain crosses the membrane as a helical span at residues 71-88 (WWVPPCCGTASAVIGLLY). The Cytoplasmic portion of the chain corresponds to 89 to 103 (PCIDRHLGEPHKFKR). The chain crosses the membrane as a helical span at residues 104 to 126 (EWSSVMRCVAVFVGINHASAKVD). Over 127–129 (FDN) the chain is Lumenal. A helical transmembrane segment spans residues 130–148 (NFQFSLTLAALSVGLWWTF). The Cytoplasmic portion of the chain corresponds to 149-153 (DRSRS). Ser151 bears the Phosphoserine mark. The helical transmembrane segment at 154–175 (GFGLGVGIAFLATVVTQLLVYN) threads the bilayer. Residues 176–189 (GVYQYTSPDFLYVR) lie on the Lumenal side of the membrane. The chain crosses the membrane as a helical span at residues 190–207 (SWLPCIFFAGGITMGNIG). The Cytoplasmic segment spans residues 208 to 225 (RQLAMYECKVIAEKSHQE). At Cys215 the chain carries Cysteine sulfenic acid (-SOH); alternate. Cys215 participates in a covalent cross-link: Glycyl cysteine thioester (Cys-Gly) (interchain with G-Cter in ubiquitin); alternate. Residues 219–225 (AEKSHQE) carry the KxHxx motif.

The protein belongs to the INSIG family. As to quaternary structure, interacts with SCAP; interaction is direct and only takes place in the presence of sterols; it prevents interaction between SCAP and the coat protein complex II (COPII). Associates with the SCAP-SREBP complex (composed of SCAP and SREBF1/SREBP1 or SREBF2/SREBP2); association is mediated via its interaction with SCAP and only takes place in the presence of sterols. Interacts with RNF139. Interacts with RNF145. Phosphorylation at Ser-151 by PCK1 reduces binding to oxysterol, disrupting the interaction between INSIG2 and SCAP, thereby promoting nuclear translocation of SREBP proteins (SREBF1/SREBP1 or SREBF2/SREBP2) and subsequent transcription of downstream lipogenesis-related genes. In terms of processing, polyubiquitinated by AMFR/gp78 at Cys-215 in some tissues such as adipose tissues, undifferentiated myoblasts and liver, leading to its degradation. In differentiated myotubes, Cys-215 oxidation prevents ubiquitination at the same site, resulting in protein stabilization. Post-translationally, oxidized at Cys-215 in differentiated myotubes, preventing ubiquitination at the same site, and resulting in protein stabilization. Expressed in liver, testis, kidney, spleen, intestine, brain and adrenal gland.

The protein resides in the endoplasmic reticulum membrane. In terms of biological role, oxysterol-binding protein that mediates feedback control of cholesterol synthesis by controlling both endoplasmic reticulum to Golgi transport of SCAP and degradation of HMGCR. Acts as a negative regulator of cholesterol biosynthesis by mediating the retention of the SCAP-SREBP complex in the endoplasmic reticulum, thereby blocking the processing of sterol regulatory element-binding proteins (SREBPs) SREBF1/SREBP1 and SREBF2/SREBP2. Binds oxysterol, including 22-hydroxycholesterol, 24-hydroxycholesterol, 25-hydroxycholesterol and 27-hydroxycholesterol, regulating interaction with SCAP and retention of the SCAP-SREBP complex in the endoplasmic reticulum. In presence of oxysterol, interacts with SCAP, retaining the SCAP-SREBP complex in the endoplasmic reticulum, thereby preventing SCAP from escorting SREBF1/SREBP1 and SREBF2/SREBP2 to the Golgi. Sterol deprivation or phosphorylation by PCK1 reduce oxysterol-binding, disrupting the interaction between INSIG2 and SCAP, thereby promoting Golgi transport of the SCAP-SREBP complex, followed by processing and nuclear translocation of SREBF1/SREBP1 and SREBF2/SREBP2. Also regulates cholesterol synthesis by regulating degradation of HMGCR: initiates the sterol-mediated ubiquitin-mediated endoplasmic reticulum-associated degradation (ERAD) of HMGCR via recruitment of the reductase to the ubiquitin ligase RNF139. The chain is Insulin-induced gene 2 protein from Mus musculus (Mouse).